The following is a 151-amino-acid chain: Ribosomal RNA large subunit methyltransferase H (151 aa).

S-adenosyl-L-methionine-binding positions include Leu-73, Gly-100, and 119 to 124; that span reads LSKMTL.

It belongs to the RNA methyltransferase RlmH family. As to quaternary structure, homodimer.

Its subcellular location is the cytoplasm. It carries out the reaction pseudouridine(1915) in 23S rRNA + S-adenosyl-L-methionine = N(3)-methylpseudouridine(1915) in 23S rRNA + S-adenosyl-L-homocysteine + H(+). Its function is as follows. Specifically methylates the pseudouridine at position 1915 (m3Psi1915) in 23S rRNA. The polypeptide is Ribosomal RNA large subunit methyltransferase H (Campylobacter lari (strain RM2100 / D67 / ATCC BAA-1060)).